Reading from the N-terminus, the 254-residue chain is Mediator of RNA polymerase II transcription subunit 8 (254 aa).

Residues 154-190 (LEEREMGIQNVVTGLRRQLEDDERDEDEDEDDEEEEE) are a coiled coil. A disordered region spans residues 167 to 234 (GLRRQLEDDE…SQQVQKGAGP (68 aa)). Acidic residues predominate over residues 173 to 199 (EDDERDEDEDEDDEEEEEGEGEDEEME).

It belongs to the Mediator complex subunit 8 family. Component of the Mediator complex.

The protein resides in the nucleus. Functionally, component of the Mediator complex, a coactivator involved in the regulated transcription of nearly all RNA polymerase II-dependent genes. Mediator functions as a bridge to convey information from gene-specific regulatory proteins to the basal RNA polymerase II transcription machinery. Mediator is recruited to promoters by direct interactions with regulatory proteins and serves as a scaffold for the assembly of a functional preinitiation complex with RNA polymerase II and the general transcription factors. This Aspergillus clavatus (strain ATCC 1007 / CBS 513.65 / DSM 816 / NCTC 3887 / NRRL 1 / QM 1276 / 107) protein is Mediator of RNA polymerase II transcription subunit 8 (med8).